A 477-amino-acid polypeptide reads, in one-letter code: Glycogen synthase (477 aa).

Lysine 15 lines the ADP-alpha-D-glucose pocket.

Belongs to the glycosyltransferase 1 family. Bacterial/plant glycogen synthase subfamily.

It catalyses the reaction [(1-&gt;4)-alpha-D-glucosyl](n) + ADP-alpha-D-glucose = [(1-&gt;4)-alpha-D-glucosyl](n+1) + ADP + H(+). It functions in the pathway glycan biosynthesis; glycogen biosynthesis. In terms of biological role, synthesizes alpha-1,4-glucan chains using ADP-glucose. This chain is Glycogen synthase, found in Mannheimia succiniciproducens (strain KCTC 0769BP / MBEL55E).